A 375-amino-acid chain; its full sequence is DNA replication and repair protein RecF (375 aa).

Gly30 to Thr37 is an ATP binding site.

It belongs to the RecF family.

It is found in the cytoplasm. Functionally, the RecF protein is involved in DNA metabolism; it is required for DNA replication and normal SOS inducibility. RecF binds preferentially to single-stranded, linear DNA. It also seems to bind ATP. The polypeptide is DNA replication and repair protein RecF (Bacillus cereus (strain ZK / E33L)).